A 155-amino-acid chain; its full sequence is Telokin-like protein 20 homolog (155 aa).

The tract at residues 109–155 (KRAVAPPHHEPEPVPAEEGAVADRAEPESGDAPPSPKKQKLDEREQD) is disordered.

The sequence is that of Telokin-like protein 20 homolog from Orgyia pseudotsugata multicapsid polyhedrosis virus (OpMNPV).